A 282-amino-acid polypeptide reads, in one-letter code: Shikimate dehydrogenase (NADP(+)) (282 aa).

Residues 16–18 (SLS) and Thr-63 each bind shikimate. Lys-67 functions as the Proton acceptor in the catalytic mechanism. Residues Asn-88 and Asp-103 each coordinate shikimate. NADP(+) contacts are provided by residues 128 to 132 (GAGGA) and Leu-219. Residue Tyr-221 participates in shikimate binding. Gly-243 contacts NADP(+).

The protein belongs to the shikimate dehydrogenase family. In terms of assembly, homodimer.

The catalysed reaction is shikimate + NADP(+) = 3-dehydroshikimate + NADPH + H(+). It participates in metabolic intermediate biosynthesis; chorismate biosynthesis; chorismate from D-erythrose 4-phosphate and phosphoenolpyruvate: step 4/7. In terms of biological role, involved in the biosynthesis of the chorismate, which leads to the biosynthesis of aromatic amino acids. Catalyzes the reversible NADPH linked reduction of 3-dehydroshikimate (DHSA) to yield shikimate (SA). The chain is Shikimate dehydrogenase (NADP(+)) from Xylella fastidiosa (strain M12).